We begin with the raw amino-acid sequence, 347 residues long: Lipoyl synthase (347 aa).

Residues Cys-55, Cys-60, Cys-66, Cys-81, Cys-85, Cys-88, and Ser-292 each coordinate [4Fe-4S] cluster. A Radical SAM core domain is found at 67–281; it reads WEDREASFLI…SEAAYDMGFP (215 aa).

Belongs to the radical SAM superfamily. Lipoyl synthase family. Requires [4Fe-4S] cluster as cofactor.

It localises to the cytoplasm. The enzyme catalyses [[Fe-S] cluster scaffold protein carrying a second [4Fe-4S](2+) cluster] + N(6)-octanoyl-L-lysyl-[protein] + 2 oxidized [2Fe-2S]-[ferredoxin] + 2 S-adenosyl-L-methionine + 4 H(+) = [[Fe-S] cluster scaffold protein] + N(6)-[(R)-dihydrolipoyl]-L-lysyl-[protein] + 4 Fe(3+) + 2 hydrogen sulfide + 2 5'-deoxyadenosine + 2 L-methionine + 2 reduced [2Fe-2S]-[ferredoxin]. Its pathway is protein modification; protein lipoylation via endogenous pathway; protein N(6)-(lipoyl)lysine from octanoyl-[acyl-carrier-protein]: step 2/2. In terms of biological role, catalyzes the radical-mediated insertion of two sulfur atoms into the C-6 and C-8 positions of the octanoyl moiety bound to the lipoyl domains of lipoate-dependent enzymes, thereby converting the octanoylated domains into lipoylated derivatives. This chain is Lipoyl synthase, found in Corynebacterium urealyticum (strain ATCC 43042 / DSM 7109).